The primary structure comprises 283 residues: Bifunctional protein FolD 1 (283 aa).

NADP(+) contacts are provided by residues 166–168 (GRS) and isoleucine 232.

This sequence belongs to the tetrahydrofolate dehydrogenase/cyclohydrolase family. As to quaternary structure, homodimer.

It catalyses the reaction (6R)-5,10-methylene-5,6,7,8-tetrahydrofolate + NADP(+) = (6R)-5,10-methenyltetrahydrofolate + NADPH. The enzyme catalyses (6R)-5,10-methenyltetrahydrofolate + H2O = (6R)-10-formyltetrahydrofolate + H(+). It participates in one-carbon metabolism; tetrahydrofolate interconversion. Functionally, catalyzes the oxidation of 5,10-methylenetetrahydrofolate to 5,10-methenyltetrahydrofolate and then the hydrolysis of 5,10-methenyltetrahydrofolate to 10-formyltetrahydrofolate. The chain is Bifunctional protein FolD 1 from Lactobacillus johnsonii (strain CNCM I-12250 / La1 / NCC 533).